The chain runs to 246 residues: uncharacterized protein (246 aa).

Ser-194 is modified (phosphoserine).

This is an uncharacterized protein from Schizosaccharomyces pombe (strain 972 / ATCC 24843) (Fission yeast).